We begin with the raw amino-acid sequence, 509 residues long: UDP-N-acetylmuramoyl-L-alanyl-D-glutamate--2,6-diaminopimelate ligase (509 aa).

Ser-30 lines the UDP-N-acetyl-alpha-D-muramoyl-L-alanyl-D-glutamate pocket. 110-116 serves as a coordination point for ATP; the sequence is GTNGKTT. UDP-N-acetyl-alpha-D-muramoyl-L-alanyl-D-glutamate is bound by residues 152–153, Ser-179, Gln-185, and Arg-187; that span reads TT. Lys-219 is subject to N6-carboxylysine. Meso-2,6-diaminopimelate contacts are provided by residues Arg-385, 409–412, Gly-476, and Glu-480; that span reads DNPR. The Meso-diaminopimelate recognition motif motif lies at 409 to 412; that stretch reads DNPR.

It belongs to the MurCDEF family. MurE subfamily. The cofactor is Mg(2+). Post-translationally, carboxylation is probably crucial for Mg(2+) binding and, consequently, for the gamma-phosphate positioning of ATP.

It localises to the cytoplasm. It catalyses the reaction UDP-N-acetyl-alpha-D-muramoyl-L-alanyl-D-glutamate + meso-2,6-diaminopimelate + ATP = UDP-N-acetyl-alpha-D-muramoyl-L-alanyl-gamma-D-glutamyl-meso-2,6-diaminopimelate + ADP + phosphate + H(+). It participates in cell wall biogenesis; peptidoglycan biosynthesis. Catalyzes the addition of meso-diaminopimelic acid to the nucleotide precursor UDP-N-acetylmuramoyl-L-alanyl-D-glutamate (UMAG) in the biosynthesis of bacterial cell-wall peptidoglycan. This Geobacter sulfurreducens (strain ATCC 51573 / DSM 12127 / PCA) protein is UDP-N-acetylmuramoyl-L-alanyl-D-glutamate--2,6-diaminopimelate ligase.